The primary structure comprises 1373 residues: DNA-directed RNA polymerase subunit beta (1373 aa).

The protein belongs to the RNA polymerase beta chain family. In terms of assembly, the RNAP catalytic core consists of 2 alpha, 1 beta, 1 beta' and 1 omega subunit. When a sigma factor is associated with the core the holoenzyme is formed, which can initiate transcription.

It catalyses the reaction RNA(n) + a ribonucleoside 5'-triphosphate = RNA(n+1) + diphosphate. In terms of biological role, DNA-dependent RNA polymerase catalyzes the transcription of DNA into RNA using the four ribonucleoside triphosphates as substrates. This is DNA-directed RNA polymerase subunit beta from Rickettsia rickettsii (strain Iowa).